We begin with the raw amino-acid sequence, 339 residues long: uncharacterized protein (339 aa).

Residues 13 to 243 (LSLNKLDVGF…PATPFICEFI (231 aa)) form the ABC transporter domain. 45–52 (GPSGSGKS) is a binding site for ATP.

This sequence belongs to the ABC transporter superfamily.

The protein resides in the cell inner membrane. Probably part of a binding-protein-dependent transport system y4fNOP. Probably responsible for energy coupling to the transport system. This is an uncharacterized protein from Sinorhizobium fredii (strain NBRC 101917 / NGR234).